Reading from the N-terminus, the 315-residue chain is tRNA dimethylallyltransferase (315 aa).

Gly14 to Thr21 serves as a coordination point for ATP. Position 16-21 (Thr16–Thr21) interacts with substrate. Interaction with substrate tRNA stretches follow at residues Asp39–Leu42, Gln163–Arg167, and Arg248–Arg253.

It belongs to the IPP transferase family. In terms of assembly, monomer. Requires Mg(2+) as cofactor.

The enzyme catalyses adenosine(37) in tRNA + dimethylallyl diphosphate = N(6)-dimethylallyladenosine(37) in tRNA + diphosphate. Functionally, catalyzes the transfer of a dimethylallyl group onto the adenine at position 37 in tRNAs that read codons beginning with uridine, leading to the formation of N6-(dimethylallyl)adenosine (i(6)A). This is tRNA dimethylallyltransferase from Paraburkholderia xenovorans (strain LB400).